An 87-amino-acid chain; its full sequence is Large ribosomal subunit protein bL27 (87 aa).

The protein belongs to the bacterial ribosomal protein bL27 family.

This is Large ribosomal subunit protein bL27 from Pseudarthrobacter chlorophenolicus (strain ATCC 700700 / DSM 12829 / CIP 107037 / JCM 12360 / KCTC 9906 / NCIMB 13794 / A6) (Arthrobacter chlorophenolicus).